The sequence spans 566 residues: Unconventional myosin-VIIa (566 aa).

Residues 67 to 566 (MMEDMIQHLG…AGVVYYESQG (500 aa)) enclose the Myosin motor domain. An ATP-binding site is contributed by 160–167 (GESGAGKT).

The protein belongs to the TRAFAC class myosin-kinesin ATPase superfamily. Myosin family. In terms of assembly, might homodimerize in a two headed molecule through the formation of a coiled-coil rod. Identified in a complex with USH1C and USH1G. Interacts with MYRIP. Interacts with RPE65. Interacts with CIB2. May interact with CALM. Interacts with WHRN. Interacts with PLEKHB1 (via PH domain). Interacts with PCDH15. Interacts with TWF2. Interacts with USH1G. Interacts with MYH9. Interacts (via MyTH4-FERM domains) with cytoplasmic regions of ADGRV1 and USH2A. Interacts with PDZD7 (via MyTH4-FERM domains). Interacts with CALML4.

It is found in the cytoplasm. Its subcellular location is the cell cortex. The protein resides in the cytoskeleton. It localises to the synapse. Functionally, myosins are actin-based motor molecules with ATPase activity. Unconventional myosins serve in intracellular movements. Their highly divergent tails bind to membranous compartments, which are then moved relative to actin filaments. In the retina, plays an important role in the renewal of the outer photoreceptor disks. Plays an important role in the distribution and migration of retinal pigment epithelial (RPE) melanosomes and phagosomes, and in the regulation of opsin transport in retinal photoreceptors. In the inner ear, plays an important role in differentiation, morphogenesis and organization of cochlear hair cell bundles. Motor protein that is a part of the functional network formed by USH1C, USH1G, CDH23 and MYO7A that mediates mechanotransduction in cochlear hair cells. Required for normal hearing. Involved in hair-cell vesicle trafficking of aminoglycosides, which are known to induce ototoxicity. In Sus scrofa (Pig), this protein is Unconventional myosin-VIIa (MYO7A).